The chain runs to 1480 residues: UDP-N-acetylglucosamine--peptide N-acetylglucosaminyltransferase (1480 aa).

TPR repeat units lie at residues Ile-38–Lys-71, Val-113–Asn-146, Ala-176–Pro-209, and Ser-288–Phe-321. Basic and acidic residues predominate over residues Pro-468–Leu-485. The tract at residues Pro-468–Ser-497 is disordered. 2 TPR repeats span residues Tyr-613–Phe-646 and Asp-648–Asn-680. Positions Leu-1093–Ala-1128 are disordered. The span at Asp-1099–Arg-1112 shows a compositional bias: polar residues. Residues Gln-1269, Lys-1272, His-1333–Arg-1336, Gly-1351–Thr-1353, and Asp-1357 contribute to the UDP site.

This sequence belongs to the glycosyltransferase 41 family. O-GlcNAc transferase subfamily.

The protein resides in the cytoplasm. It is found in the nucleus. The enzyme catalyses L-seryl-[protein] + UDP-N-acetyl-alpha-D-glucosamine = 3-O-(N-acetyl-beta-D-glucosaminyl)-L-seryl-[protein] + UDP + H(+). The catalysed reaction is L-threonyl-[protein] + UDP-N-acetyl-alpha-D-glucosamine = 3-O-(N-acetyl-beta-D-glucosaminyl)-L-threonyl-[protein] + UDP + H(+). Its pathway is protein modification; protein glycosylation. Functionally, catalyzes the transfer of a single N-acetylglucosamine from UDP-GlcNAc to a serine or threonine residue in cytoplasmic and nuclear proteins resulting in their modification with a beta-linked N-acetylglucosamine (O-GlcNAc). The sequence is that of UDP-N-acetylglucosamine--peptide N-acetylglucosaminyltransferase from Giardia intestinalis (strain ATCC 50803 / WB clone C6) (Giardia lamblia).